We begin with the raw amino-acid sequence, 350 residues long: S-adenosylmethionine:tRNA ribosyltransferase-isomerase (350 aa).

The protein belongs to the QueA family. Monomer.

It localises to the cytoplasm. The enzyme catalyses 7-aminomethyl-7-carbaguanosine(34) in tRNA + S-adenosyl-L-methionine = epoxyqueuosine(34) in tRNA + adenine + L-methionine + 2 H(+). It participates in tRNA modification; tRNA-queuosine biosynthesis. Transfers and isomerizes the ribose moiety from AdoMet to the 7-aminomethyl group of 7-deazaguanine (preQ1-tRNA) to give epoxyqueuosine (oQ-tRNA). The sequence is that of S-adenosylmethionine:tRNA ribosyltransferase-isomerase from Saccharophagus degradans (strain 2-40 / ATCC 43961 / DSM 17024).